Consider the following 399-residue polypeptide: MKDRVVLAYSGGLDTTVAISWIAKERNAEVIAVSIDLGQGGEDMETVRQRALGAGAVESIVVDARDEFANDYCLPTIKANGLYMKEYPLVSAISRPLIVKHMAEAAKEHNGTAVAHGCTGKGNDQVRFEVGFANTAPELEIIAPARDYAWTRDKAIAFAEENNIPIEQSKSSPFSIDQNVWGRAVETGYLEDLWNAPTKDVYAYTEDPALGQAPDEVIISFESGVPVAIDGRKVTVLEAIEELNRRAGAQGVGRLDMVEDRLVGIKSREIYEAPGAMTLIRAHEAMEAVTIERELARYKRGIDAEWSDLVYDGLWFSPLKRSLDAFIEESQEHVTGDIRLVLHAGNIIINGRRSDHSLYDFNLATYDEGDSFDQSLAKGFVELHGLSSKIAAKRDMGIL.

ATP is bound at residue 8-16; sequence AYSGGLDTT. An L-citrulline-binding site is contributed by Tyr-87. Gly-117 serves as a coordination point for ATP. 3 residues coordinate L-aspartate: Thr-119, Asn-123, and Asp-124. Asn-123 serves as a coordination point for L-citrulline. Positions 127, 175, 259, and 271 each coordinate L-citrulline.

The protein belongs to the argininosuccinate synthase family. Type 1 subfamily. In terms of assembly, homotetramer.

The protein resides in the cytoplasm. It carries out the reaction L-citrulline + L-aspartate + ATP = 2-(N(omega)-L-arginino)succinate + AMP + diphosphate + H(+). The protein operates within amino-acid biosynthesis; L-arginine biosynthesis; L-arginine from L-ornithine and carbamoyl phosphate: step 2/3. The chain is Argininosuccinate synthase from Corynebacterium urealyticum (strain ATCC 43042 / DSM 7109).